The following is a 181-amino-acid chain: HGPRTase-like protein 2 (181 aa).

Belongs to the purine/pyrimidine phosphoribosyltransferase family. Archaeal HPRT subfamily.

In terms of biological role, may catalyze a purine salvage reaction, the substrate is unknown. This is HGPRTase-like protein 2 from Natrialba magadii (strain ATCC 43099 / DSM 3394 / CCM 3739 / CIP 104546 / IAM 13178 / JCM 8861 / NBRC 102185 / NCIMB 2190 / MS3) (Natronobacterium magadii).